The chain runs to 125 residues: Small ribosomal subunit protein uS12m (125 aa).

Residues 1–26 are disordered; sequence MPTINQLLRKKSSRQAPKLKSKKPAL. Over residues 8-23 the composition is skewed to basic residues; that stretch reads LRKKSSRQAPKLKSKK.

It belongs to the universal ribosomal protein uS12 family.

The protein resides in the mitochondrion. The chain is Small ribosomal subunit protein uS12m (RPS12) from Prototheca wickerhamii.